Reading from the N-terminus, the 303-residue chain is Aquaporin-7 (303 aa).

Residues 1 to 21 (MAPRSVLETIQSVLQKNMVRE) are Cytoplasmic-facing. Residue serine 5 is modified to Phosphoserine. The helical transmembrane segment at 22-39 (FLAEFLSTYVMMVFGLGS) threads the bilayer. Residues 40 to 52 (VAHMVLGENSGSY) are Extracellular-facing. The helical transmembrane segment at 53-70 (LGVNLGFGFGVTMGVHVA) threads the bilayer. Residues 71 to 74 (GGIS) lie on the Cytoplasmic side of the membrane. Residues 75 to 88 (GAHMNAAVTFTNCA) constitute an intramembrane region (discontinuously helical). Positions 79-81 (NAA) match the NPA 1 motif. At 89–96 (LGRMTWKK) the chain is on the cytoplasmic side. Residues 97-117 (FPVYVLGQFLGSFSAAATTYL) form a helical membrane-spanning segment. The Extracellular portion of the chain corresponds to 118 to 152 (IFYGAINHFAGGDLLVTGSKATANIFATYLPEYMT). Residues 153 to 173 (LWRGFLDEAFVTGMLQLCLFA) traverse the membrane as a helical segment. Residues 174 to 185 (ITDKKNSPALQG) lie on the Cytoplasmic side of the membrane. The chain crosses the membrane as a helical span at residues 186–202 (TEPLVIGILVTVLGVSL). Residues 203–206 (GMNS) are Extracellular-facing. The discontinuously helical intramembrane region spans 207–220 (GYAINPSRDLPPRL). The NPA 2 signature appears at 211 to 213 (NPS). Over 221–238 (FTFIAGWGKQVFRAGNNW) the chain is Extracellular. The helical transmembrane segment at 239-260 (WWVPVVAPLLGAYLGGIVYLGL) threads the bilayer. The Cytoplasmic segment spans residues 261-303 (IHPSIPQDPQRLENFTARDQKVTASYKNAASANISGSVPLEHF).

This sequence belongs to the MIP/aquaporin (TC 1.A.8) family. Homotetramer; each monomer provides an independent glycerol/water pore. Two homotetramers on opposing membranes can dimerize, forming a cell-cell junction. Interacts with PLIN1. Post-translationally, phosphorylation by PKA could prevent the interaction with PLIN1. As to expression, detected in proximal tubules in kidney. Detected in the capillary network between muscle fibers in skeletal muscle and heart, and in spermatids and on spermatozoa tails in testis and epididymis. Detected in white and brown adipose tissue, especially on small blood vessels (at protein level). Detected in kidney and white adipose tissue.

The protein localises to the cell membrane. It localises to the cytoplasmic vesicle membrane. Its subcellular location is the lipid droplet. The catalysed reaction is glycerol(in) = glycerol(out). The enzyme catalyses H2O(in) = H2O(out). It catalyses the reaction urea(in) = urea(out). With respect to regulation, glycerol transport is regulated by pH, with the porin being permeable to glycerol at pH 7.4 but not at pH 5.5. Water permeability, however, is not influenced by pH. Functionally, aquaglyceroporins form homotetrameric transmembrane channels, with each monomer independently mediating glycerol and water transport across the plasma membrane along their osmotic gradient. Could also be permeable to urea. Mediates the efflux of glycerol, formed upon triglyceride hydrolysis, to avoid its accumulation in adipocytes and to make it available to other tissues. In the kidney, mediates the reabsorption of glycerol, preventing its loss in urine, again participating to energy homeostasis. In pancreatic beta cells, it also mediates the efflux of glycerol, regulating its intracellular levels. This is Aquaporin-7 from Mus musculus (Mouse).